The following is a 629-amino-acid chain: tRNA uridine 5-carboxymethylaminomethyl modification enzyme MnmG (629 aa).

13–18 (GGGHAG) lines the FAD pocket. 273-287 (GPRYCPSIEDKVVRF) lines the NAD(+) pocket.

Belongs to the MnmG family. Homodimer. Heterotetramer of two MnmE and two MnmG subunits. FAD serves as cofactor.

It is found in the cytoplasm. In terms of biological role, NAD-binding protein involved in the addition of a carboxymethylaminomethyl (cmnm) group at the wobble position (U34) of certain tRNAs, forming tRNA-cmnm(5)s(2)U34. The sequence is that of tRNA uridine 5-carboxymethylaminomethyl modification enzyme MnmG from Nitrosococcus oceani (strain ATCC 19707 / BCRC 17464 / JCM 30415 / NCIMB 11848 / C-107).